The primary structure comprises 232 residues: (S)-2-haloacid dehalogenase (232 aa).

D10 serves as the catalytic Nucleophile. Residues 11–12 (LY), R41, and 118–119 (SN) contribute to the an (S)-2-haloacid site. An important for catalytic activity region spans residues 175–180 (SSNAWD).

It belongs to the HAD-like hydrolase superfamily. S-2-haloalkanoic acid dehalogenase family. In terms of assembly, homodimer.

The enzyme catalyses an (S)-2-haloacid + H2O = a (2R)-2-hydroxycarboxylate + a halide anion + H(+). It carries out the reaction (S)-2-chloropropanoate + H2O = (R)-lactate + chloride + H(+). In terms of biological role, catalyzes the hydrolytic dehalogenation of small (S)-2-haloalkanoic acids to yield the corresponding (R)-2-hydroxyalkanoic acids. Acts on acids of short chain lengths, C(2) to C(4), with inversion of configuration at C-2. Active with 2-halogenated carboxylic acids and converts only the S-isomer (or L-isomer) of 2-chloropropionic acid with inversion of configuration to produce R-lactate (or D-isomer). This chain is (S)-2-haloacid dehalogenase, found in Pseudomonas sp. (strain YL).